Consider the following 1161-residue polypeptide: Nardilysin (1161 aa).

An N-terminal signal peptide occupies residues 1-18 (MLRRVAVAAVCVTGRKLR). Disordered stretches follow at residues 49–103 (MPGR…IIKS) and 130–218 (VEGK…KKTT). A phosphoserine mark is found at serine 85, serine 91, and serine 93. Residues 138-209 (TDEEEEEEEE…EENELEELEE (72 aa)) show a composition bias toward acidic residues. Histidine 244 is a binding site for Zn(2+). Residue glutamate 247 is the Proton acceptor of the active site. Zn(2+) contacts are provided by histidine 248 and glutamate 325.

It belongs to the peptidase M16 family. Interacts with BACE1 and NRG1. Zn(2+) is required as a cofactor. In terms of tissue distribution, highly expressed in brain of early postnatal mice but expressed at a lower level in the brains of adult mice. Expression is high in cortical neurons, and lower in neurons in the striatum. Very low expression detected in the corpus callosum. Also expressed in the gray matter in spinal cord and dorsal root ganglia.

It localises to the mitochondrion. The protein localises to the cell projection. It is found in the dendrite. The enzyme catalyses Hydrolysis of polypeptides, preferably at -Xaa-|-Arg-Lys-, and less commonly at -Arg-|-Arg-Xaa-, in which Xaa is not Arg or Lys.. Its function is as follows. Cleaves peptide substrates on the N-terminus of arginine residues in dibasic pairs. Is a critical activator of BACE1- and ADAM17-mediated pro-neuregulin ectodomain shedding, involved in the positive regulation of axonal maturation and myelination. Required for proper functioning of 2-oxoglutarate dehydrogenase (OGDH). The sequence is that of Nardilysin from Mus musculus (Mouse).